Consider the following 394-residue polypeptide: Elongation factor Tu 1 (394 aa).

One can recognise a tr-type G domain in the interval 10–204 (KPHVNVGTIG…ALDSYIPEPE (195 aa)). The segment at 19–26 (GHVDHGKT) is G1. 19–26 (GHVDHGKT) is a GTP binding site. Thr-26 provides a ligand contact to Mg(2+). The tract at residues 60-64 (GITIS) is G2. The G3 stretch occupies residues 81 to 84 (DCPG). Residues 81-85 (DCPGH) and 136-139 (NKCD) contribute to the GTP site. Positions 136-139 (NKCD) are G4. Residues 174 to 176 (SAL) are G5.

The protein belongs to the TRAFAC class translation factor GTPase superfamily. Classic translation factor GTPase family. EF-Tu/EF-1A subfamily. In terms of assembly, monomer.

It is found in the cytoplasm. It catalyses the reaction GTP + H2O = GDP + phosphate + H(+). Its function is as follows. GTP hydrolase that promotes the GTP-dependent binding of aminoacyl-tRNA to the A-site of ribosomes during protein biosynthesis. This chain is Elongation factor Tu 1, found in Photorhabdus laumondii subsp. laumondii (strain DSM 15139 / CIP 105565 / TT01) (Photorhabdus luminescens subsp. laumondii).